Reading from the N-terminus, the 190-residue chain is Holliday junction branch migration complex subunit RuvA (190 aa).

Positions 1-63 (MLDFIKGKVI…EESIEIYGFL (63 aa)) are domain I. The tract at residues 64–139 (ESSERDLFEE…ILPSLQYEKD (76 aa)) is domain II. Residue D139 is a region of interest, flexible linker. A domain III region spans residues 139-190 (DQKYDDILSALLNLGYKRLEAKEVLDKIYNNEKDEATIIRESLSILAGKDGK).

This sequence belongs to the RuvA family. In terms of assembly, homotetramer. Forms an RuvA(8)-RuvB(12)-Holliday junction (HJ) complex. HJ DNA is sandwiched between 2 RuvA tetramers; dsDNA enters through RuvA and exits via RuvB. An RuvB hexamer assembles on each DNA strand where it exits the tetramer. Each RuvB hexamer is contacted by two RuvA subunits (via domain III) on 2 adjacent RuvB subunits; this complex drives branch migration. In the full resolvosome a probable DNA-RuvA(4)-RuvB(12)-RuvC(2) complex forms which resolves the HJ.

The protein localises to the cytoplasm. In terms of biological role, the RuvA-RuvB-RuvC complex processes Holliday junction (HJ) DNA during genetic recombination and DNA repair, while the RuvA-RuvB complex plays an important role in the rescue of blocked DNA replication forks via replication fork reversal (RFR). RuvA specifically binds to HJ cruciform DNA, conferring on it an open structure. The RuvB hexamer acts as an ATP-dependent pump, pulling dsDNA into and through the RuvAB complex. HJ branch migration allows RuvC to scan DNA until it finds its consensus sequence, where it cleaves and resolves the cruciform DNA. In Thermodesulfovibrio yellowstonii (strain ATCC 51303 / DSM 11347 / YP87), this protein is Holliday junction branch migration complex subunit RuvA.